The following is a 484-amino-acid chain: Transcription factor MYB88 (484 aa).

Residues 1-20 are disordered; that stretch reads MEETTKQNNMKKKKKILLHS. A Nuclear localization signal motif is present at residues 13-20; it reads KKKILLHS. 2 HTH myb-type domains span residues 25–76 and 77–131; these read KKER…YTYL and NSDF…KKRA. 2 consecutive DNA-binding regions (H-T-H motif) follow at residues 53 to 76 and 104 to 127; these read WAII…YTYL and WTEI…TTLC. Disordered stretches follow at residues 215 to 241, 321 to 383, and 458 to 484; these read NATS…DKSN, RSSN…GGEL, and GVES…LDSL. Basic and acidic residues predominate over residues 232–241; the sequence is KESDGEDKSN. The span at 339–348 shows a compositional bias: low complexity; that stretch reads SPASSEYSSG. Polar residues predominate over residues 354 to 380; it reads TIMTHPSGDKTQQLMSDTQTTSHQQNG. Residues 463 to 476 are compositionally biased toward pro residues; it reads SPYPSANPSQPPPC.

As to quaternary structure, interacts with RBR1. In terms of tissue distribution, expressed at low levels in all organs including roots, leaves, hypocotyls stems, flowers, siliques and buds.

Its subcellular location is the nucleus. Transcription factor that binds to DNA in promoters cis-regulatory element 5'-GGCGCGC-3' of cell cycle genes, including cyclins, cyclin-dependent kinases (CDKs), and components of the pre-replication complex. Binds to DNA in promoters cis-regulatory element 5'-AGCCG-3' of auxin regulated genes (e.g. PIN3 and PIN7). Together with FAMA and MYB124, ensures that stomata contain just two guard cells (GCs) by enforcing a single symmetric precursor cell division before stomatal maturity. Represses the expression of the mitosis-inducing factors CDKB1-1 and CDKA-1, specifically required for the last guard mother cells (GMC) symmetric divisions in the stomatal pathway. Represses CYCA2-3 in newly formed guard cells. Together with MYB88, regulates stomata spacing by restricting divisions late in the stomatal cell lineage thus limiting the number of GMC divisions. In collaboration with CDKB1-1 and CDKB1-2, restrict the G1/S transition and chloroplast and nuclear number during stomatal formation, and normally maintain fate and developmental progression throughout the stomatal cell lineage. Involved in sensing and/or transducing abiotic stress (e.g. drought and salt), probably via the positive regulation of NAC019. Regulates female reproduction being required for entry into megasporogenesis, probably via the regulation of cell cycle genes. Plays a minor role in lateral roots (LRs) initiation. Involved complementarily in establishing the gravitropic set-point angles of lateral roots by regulating the transcription of PIN3 and PIN7 in gravity-sensing cells of primary and lateral roots. The sequence is that of Transcription factor MYB88 from Arabidopsis thaliana (Mouse-ear cress).